Here is a 519-residue protein sequence, read N- to C-terminus: Membrane-bound glycerophospholipid O-acyltransferase 2 (519 aa).

6 consecutive transmembrane segments (helical) span residues 22-42 (PIDQVNFVVCQLFALLAAVWF), 61-81 (TLLGLYLAFFCFGWYALHFLV), 88-108 (CIMIIAGVESMHQCCFVFALG), 184-204 (FMGILAGPLCSYKDYIAFIEG), 236-256 (LLVCGLSLLFHLTISSMLPVE), and 288-305 (YFAWTLADAINNAAGFGF). Catalysis depends on residues asparagine 341 and histidine 372. 3 helical membrane-spanning segments follow: residues 365–385 (FFLSAIWHGVYPGYYLTFLTG), 415–435 (IITWAATQITISYTVVPFVLL), and 443–463 (FYRSWYYCLHICSILVLLLLP).

The protein belongs to the membrane-bound acyltransferase family.

Its subcellular location is the endoplasmic reticulum membrane. It carries out the reaction a 1-acyl-sn-glycero-3-phosphocholine + an acyl-CoA = a 1,2-diacyl-sn-glycero-3-phosphocholine + CoA. The enzyme catalyses a 1-acyl-sn-glycero-3-phosphoethanolamine + an acyl-CoA = a 1,2-diacyl-sn-glycero-3-phosphoethanolamine + CoA. It catalyses the reaction a 1-acyl-sn-glycero-3-phosphate + an acyl-CoA = a 1,2-diacyl-sn-glycero-3-phosphate + CoA. The catalysed reaction is (9Z)-hexadecenoyl-CoA + 1-hexadecanoyl-sn-glycero-3-phosphocholine = 1-hexadecanoyl-2-(9Z-hexadecenoyl)-sn-glycero-3-phosphocholine + CoA. It carries out the reaction 1-hexadecanoyl-sn-glycero-3-phosphoethanolamine + (9Z)-octadecenoyl-CoA = 1-hexadecanoyl-2-(9Z-octadecenoyl)-sn-glycero-3-phosphoethanolamine + CoA. The enzyme catalyses 1-hexadecanoyl-sn-glycero-3-phosphoethanolamine + (9Z)-hexadecenoyl-CoA = 1-hexadecanoyl-2-(9Z)-hexadecenoyl-sn-glycero-3-phosphoethanolamine + CoA. It catalyses the reaction 1-(9Z-octadecenoyl)-sn-glycero-3-phospho-L-serine + hexadecanoyl-CoA = 1-(9Z)-octadecenoyl-2-hexadecanoyl-sn-glycero-3-phosphoserine + CoA. The catalysed reaction is (9Z,12Z)-octadecadienoyl-CoA + 1-hexadecanoyl-sn-glycero-3-phosphocholine = 1-hexadecanoyl-2-(9Z,12Z-octadecadienoyl)-sn-glycero-3-phosphocholine + CoA. It carries out the reaction 1-hexadecanoyl-sn-glycero-3-phosphocholine + (9Z)-octadecenoyl-CoA = 1-hexadecanoyl-2-(9Z-octadecenoyl)-sn-glycero-3-phosphocholine + CoA. The enzyme catalyses 1-hexadecanoyl-sn-glycero-3-phosphate + (9Z)-hexadecenoyl-CoA = 1-hexadecanoyl-2-[(9Z)-hexadec-9-enoyl]-sn-glycero-3-phosphate + CoA. It catalyses the reaction 1-hexadecanoyl-sn-glycero-3-phosphate + (9Z)-octadecenoyl-CoA = 1-hexadecanoyl-2-(9Z-octadecenoyl)-sn-glycero-3-phosphate + CoA. The catalysed reaction is a 1-O-(1Z-alkenyl)-sn-glycero-3-phosphocholine + (9Z)-octadecenoyl-CoA = 1-O-(1Z)-alkenyl-2-(9Z)-octadecenoyl-sn-glycero-3-phosphocholine + CoA. It carries out the reaction a 1-O-(1Z-alkenyl)-sn-glycero-3-phosphoethanolamine + (9Z)-octadecenoyl-CoA = 1-O-(1Z)-alkenyl-2-(9Z)-octadecenoyl-sn-glycero-3-phosphoethanolamine + CoA. The enzyme catalyses 1-octadecanoyl-sn-glycero-3-phosphoethanolamine + (9Z)-octadecenoyl-CoA = 1-octadecanoyl-2-(9Z-octadecenoyl)-sn-glycero-3-phosphoethanolamine + CoA. It catalyses the reaction 1-octadecanoyl-sn-glycero-3-phosphocholine + (9Z)-octadecenoyl-CoA = 1-octadecanoyl-2-(9Z-octadecenoyl)-sn-glycero-3-phosphocholine + CoA. The catalysed reaction is 1-(9Z-octadecenoyl)-sn-glycero-3-phosphoethanolamine + (9Z)-octadecenoyl-CoA = 1,2-di-(9Z-octadecenoyl)-sn-glycero-3-phosphoethanolamine + CoA. It participates in lipid metabolism; phospholipid metabolism. Its activity is regulated as follows. Partially inhibited by thimerosal. In terms of biological role, acyltransferase which catalyzes the transfer of an acyl group from an acyl-CoA to a lysophospholipid leading to the production of a phospholipid and participates in the reacylation step of the phospholipid remodeling pathway also known as the Lands cycle. May catalyze preferentially the acylation of lysophosphatidylethanolamine (1-acyl-sn-glycero-3-phosphoethanolamine or LPE) and lysophosphatidic acid (LPA) and to a lesser extend lysophosphatidylcholine (LPC) and lysophosphatidylserine (LPS). Prefers oleoyl-CoA as the acyl donor. May be involved in chondrocyte differentiation. The polypeptide is Membrane-bound glycerophospholipid O-acyltransferase 2 (Rattus norvegicus (Rat)).